We begin with the raw amino-acid sequence, 943 residues long: Translation initiation factor IF-2 (943 aa).

The tract at residues 30 to 357 is disordered; the sequence is SVKSHSSSVE…KPVTERKFHE (328 aa). Composition is skewed to basic and acidic residues over residues 69–82, 112–137, 145–155, 163–196, and 224–253; these read PKEE…DKAS, FKAE…DNRN, QGKRHNNDRRN, DHNK…RDNA, and RQSE…EKQQ. The span at 254 to 266 shows a compositional bias: low complexity; that stretch reads VKVAVQKAAAETK. Over residues 296–309 the composition is skewed to basic and acidic residues; sequence KSRDNRRVNEDGPK. The segment covering 313–332 has biased composition (low complexity); it reads NNKWNNQNQVRNQRNSNWNK. Positions 445 to 614 constitute a tr-type G domain; the sequence is ERAPVVTIMG…LLVAEVEELK (170 aa). Residues 454 to 461 form a G1 region; that stretch reads GHVDHGKT. 454–461 contacts GTP; sequence GHVDHGKT. The tract at residues 479-483 is G2; that stretch reads GITQH. The interval 500–503 is G3; sequence DTPG. GTP contacts are provided by residues 500–504 and 554–557; these read DTPGH and NKID. The interval 554–557 is G4; it reads NKID. The G5 stretch occupies residues 590–592; it reads SAK.

Belongs to the TRAFAC class translation factor GTPase superfamily. Classic translation factor GTPase family. IF-2 subfamily.

The protein resides in the cytoplasm. Functionally, one of the essential components for the initiation of protein synthesis. Protects formylmethionyl-tRNA from spontaneous hydrolysis and promotes its binding to the 30S ribosomal subunits. Also involved in the hydrolysis of GTP during the formation of the 70S ribosomal complex. The chain is Translation initiation factor IF-2 from Streptococcus thermophilus (strain ATCC BAA-250 / LMG 18311).